A 268-amino-acid chain; its full sequence is Glucosamine-6-phosphate deaminase (268 aa).

The active-site Proton acceptor; for enolization step is the Asp72. The active-site For ring-opening step is the Asp141. The Proton acceptor; for ring-opening step role is filled by His143. The For ring-opening step role is filled by Glu148.

Belongs to the glucosamine/galactosamine-6-phosphate isomerase family. NagB subfamily. Homohexamer.

The catalysed reaction is alpha-D-glucosamine 6-phosphate + H2O = beta-D-fructose 6-phosphate + NH4(+). It participates in amino-sugar metabolism; N-acetylneuraminate degradation; D-fructose 6-phosphate from N-acetylneuraminate: step 5/5. With respect to regulation, allosterically activated by N-acetylglucosamine 6-phosphate (GlcNAc6P). Catalyzes the reversible isomerization-deamination of glucosamine 6-phosphate (GlcN6P) to form fructose 6-phosphate (Fru6P) and ammonium ion. This is Glucosamine-6-phosphate deaminase from Histophilus somni (strain 129Pt) (Haemophilus somnus).